The following is a 117-amino-acid chain: MKVGKAKKKPEIFSAHCSVATAFLDPSFFYPNFVAQKASHYNDKTGSANIWTYISRTGSLLLFTQVVYRKSKWTHQSATFADCIYCQSGQSPSVSLSCSDARQTWMQHRGWSSLMSL.

It localises to the cytoplasm. The protein localises to the nucleus. This is an uncharacterized protein from Saccharomyces cerevisiae (strain ATCC 204508 / S288c) (Baker's yeast).